The following is a 193-amino-acid chain: MTDYLLLFVGTVLVNNFVLVKFLGLCPFMGVSKKLETAMGMGLATTFVMTLASICAWLIDTWILIPLDLVYLRTLSFILVIAVVVQFTEMVVRKTSPALYRLLGIFLPLITTNCAVLGVALLNINLGHHFLQSALYGFSAAVGFSLVMVLFAAIRERLAVADVPAPFRGNAIALITAGLMSLAFMGFSGLVKL.

Helical transmembrane passes span 5–25 (LLLF…FLGL), 47–67 (FVMT…LIPL), 72–92 (LRTL…EMVV), 102–122 (LLGI…VALL), 134–154 (ALYG…FAAI), and 171–191 (AIAL…SGLV).

This sequence belongs to the NqrDE/RnfAE family. The complex is composed of six subunits: RsxA, RsxB, RsxC, RsxD, RsxE and RsxG.

The protein localises to the cell inner membrane. In terms of biological role, part of a membrane-bound complex that couples electron transfer with translocation of ions across the membrane. Required to maintain the reduced state of SoxR. The protein is Ion-translocating oxidoreductase complex subunit A of Salmonella arizonae (strain ATCC BAA-731 / CDC346-86 / RSK2980).